The chain runs to 156 residues: Small ribosomal subunit protein uS7 (156 aa).

Belongs to the universal ribosomal protein uS7 family. In terms of assembly, part of the 30S ribosomal subunit. Contacts proteins S9 and S11.

In terms of biological role, one of the primary rRNA binding proteins, it binds directly to 16S rRNA where it nucleates assembly of the head domain of the 30S subunit. Is located at the subunit interface close to the decoding center, probably blocks exit of the E-site tRNA. This Lactobacillus acidophilus (strain ATCC 700396 / NCK56 / N2 / NCFM) protein is Small ribosomal subunit protein uS7.